We begin with the raw amino-acid sequence, 147 residues long: MALKRINKELQDLGRDPPAQCSAGPVGDDLFHWQATIMGPPDSPYQGGVFFLTIHFPTDYPFKPPKVAFTTRIYHPNINSNGSICLDILRSQWSPALTISKVLLSICSLLCDPNPDDPLVPEIARIYKTDREKYNELAREWTRKYAM.

One can recognise a UBC core domain in the interval 1 to 147 (MALKRINKEL…AREWTRKYAM (147 aa)). The Glycyl thioester intermediate role is filled by Cys85.

This sequence belongs to the ubiquitin-conjugating enzyme family.

The enzyme catalyses S-ubiquitinyl-[E1 ubiquitin-activating enzyme]-L-cysteine + [E2 ubiquitin-conjugating enzyme]-L-cysteine = [E1 ubiquitin-activating enzyme]-L-cysteine + S-ubiquitinyl-[E2 ubiquitin-conjugating enzyme]-L-cysteine.. It participates in protein modification; protein ubiquitination. Catalyzes the covalent attachment of ubiquitin to other proteins. Mediates the selective degradation of short-lived and abnormal proteins. Required for proper telomere behavior during cell divisions and possibly for ubiquitination of proteins involved in postmeiotic stages of spermatogenesis. Deletion mutations are lethal in homozygotes. The protein is Ubiquitin-conjugating enzyme E2-17 kDa (eff) of Drosophila melanogaster (Fruit fly).